Consider the following 201-residue polypeptide: NAD(P)H dehydrogenase (quinone) (201 aa).

The 188-residue stretch at 4-191 (VLVLYYSMYG…KIAKCQGVHV (188 aa)) folds into the Flavodoxin-like domain. FMN contacts are provided by residues 10 to 15 (SMYGHV) and 79 to 81 (TRF). Tyr-12 contacts NAD(+). Position 99 (Trp-99) interacts with substrate. Residues 114–120 (STGTQHG) and His-135 each bind FMN.

This sequence belongs to the WrbA family. The cofactor is FMN.

It catalyses the reaction a quinone + NADH + H(+) = a quinol + NAD(+). The enzyme catalyses a quinone + NADPH + H(+) = a quinol + NADP(+). This chain is NAD(P)H dehydrogenase (quinone), found in Hydrogenovibrio crunogenus (strain DSM 25203 / XCL-2) (Thiomicrospira crunogena).